The primary structure comprises 468 residues: ATP synthase subunit beta (468 aa).

ATP is bound at residue 155–162 (GGAGVGKT).

Belongs to the ATPase alpha/beta chains family. As to quaternary structure, F-type ATPases have 2 components, CF(1) - the catalytic core - and CF(0) - the membrane proton channel. CF(1) has five subunits: alpha(3), beta(3), gamma(1), delta(1), epsilon(1). CF(0) has three main subunits: a(1), b(2) and c(9-12). The alpha and beta chains form an alternating ring which encloses part of the gamma chain. CF(1) is attached to CF(0) by a central stalk formed by the gamma and epsilon chains, while a peripheral stalk is formed by the delta and b chains.

The protein localises to the cell membrane. The catalysed reaction is ATP + H2O + 4 H(+)(in) = ADP + phosphate + 5 H(+)(out). Produces ATP from ADP in the presence of a proton gradient across the membrane. The catalytic sites are hosted primarily by the beta subunits. The sequence is that of ATP synthase subunit beta from Streptococcus sanguinis (strain SK36).